Here is a 327-residue protein sequence, read N- to C-terminus: Serine/threonine-protein phosphatase PP1-beta catalytic subunit (327 aa).

Residue Ala-2 is modified to N-acetylalanine. The Mn(2+) site is built by Asp-63, His-65, Asp-91, and Asn-123. His-124 serves as the catalytic Proton donor. Residues His-172 and His-247 each coordinate Mn(2+). The segment at 305–327 (QYGGLNSGRPVTPPRTANPPKKR) is disordered. Thr-316 bears the Phosphothreonine mark.

This sequence belongs to the PPP phosphatase family. PP-1 subfamily. As to quaternary structure, PP1 comprises a catalytic subunit, PPP1CA, PPP1CB or PPP1CC, which is folded into its native form by inhibitor 2 and glycogen synthetase kinase 3, and then complexed to one or several targeting or regulatory subunits. The targeting or regulatory subunits determine the substrate specificity of PP1. PPP1R12A, PPP1R12B and PPP1R12C mediate binding to myosin. PPP1R3A (in skeletal muscle), PPP1R3B (in liver), PPP1R3C, PPP1R3D and PPP1R3F (in brain) mediate binding to glycogen. PPP1R15A and PPP1R15B mediate binding to EIF2S1. Part of a complex containing PPP1R15B, PP1 and NCK1/2. Interacts with PPP1R7 and PPP1R12C. Interacts with PPP1R16B. Component of the PTW/PP1 phosphatase complex, composed of PPP1R10/PNUTS, TOX4, WDR82, and PPP1CA or PPP1CB or PPP1CC. Interacts with PPP1R8. Interacts with PPP1R12A and NUAK1; the interaction is direct. Interacts with TRIM28; the interaction is weak. Interacts with FOXP3. Interacts with RRP1B. Interacts with SERPINE1. Interacts with LZTR1. Component of the SHOC2-MRAS-PP1c (SMP) complex consisting of SHOC2, GTP-bound M-Ras/MRAS and the catalytic subunit of protein phosphatase 1 (either PPP1CA, PPP1CB or PPP1CC). SHOC2 and PP1c preferably bind M-Ras/MRAS, but they also bind K-Ras/KRAS, N-Ras/NRAS and H-Ras/HRAS; these interactions are GTP-dependent and both SHOC2 and PP1c are required to form a stable complex. Interacts with SHOC2 in the absence of Ras GTPases. It depends on Mn(2+) as a cofactor.

It is found in the cytoplasm. Its subcellular location is the nucleus. It localises to the nucleoplasm. The protein localises to the nucleolus. It catalyses the reaction O-phospho-L-seryl-[protein] + H2O = L-seryl-[protein] + phosphate. It carries out the reaction O-phospho-L-threonyl-[protein] + H2O = L-threonyl-[protein] + phosphate. The enzyme catalyses O-phospho-L-seryl-[myosin light chain] + H2O = L-seryl-[myosin light chain] + phosphate. The catalysed reaction is O-phospho-L-threonyl-[myosin light chain] + H2O = L-threonyl-[myosin light chain] + phosphate. With respect to regulation, inhibited by the toxins okadaic acid, tautomycin and microcystin Leu-Arg. The phosphatase activity of the PPP1R15A-PP1 complex toward EIF2S1 is specifically inhibited by Salubrinal, a drug that protects cells from endoplasmic reticulum stress. Its function is as follows. Protein phosphatase that associates with over 200 regulatory proteins to form highly specific holoenzymes which dephosphorylate hundreds of biological targets. Protein phosphatase (PP1) is essential for cell division, it participates in the regulation of glycogen metabolism, muscle contractility and protein synthesis. Involved in regulation of ionic conductances and long-term synaptic plasticity. Component of the PTW/PP1 phosphatase complex, which plays a role in the control of chromatin structure and cell cycle progression during the transition from mitosis into interphase. In balance with CSNK1D and CSNK1E, determines the circadian period length, through the regulation of the speed and rhythmicity of PER1 and PER2 phosphorylation. May dephosphorylate CSNK1D and CSNK1E. Core component of the SHOC2-MRAS-PP1c (SMP) holophosphatase complex that regulates the MAPK pathway activation. The SMP complex specifically dephosphorylates the inhibitory phosphorylation at 'Ser-259' of RAF1 kinase, 'Ser-365' of BRAF kinase and 'Ser-214' of ARAF kinase, stimulating their kinase activities. The SMP complex enhances the dephosphorylation activity and substrate specificity of PP1c. This is Serine/threonine-protein phosphatase PP1-beta catalytic subunit (PPP1CB) from Bos taurus (Bovine).